The chain runs to 928 residues: Probable outer membrane protein pmp11 (928 aa).

Residues 1–24 (MKTSIPWVLVSSVLAFSCHLQSLA) form the signal peptide. The region spanning 627–928 (GMEHKQGFWV…NVDVGTKLRF (302 aa)) is the Autotransporter domain.

This sequence belongs to the PMP outer membrane protein family.

The protein resides in the secreted. Its subcellular location is the cell wall. The protein localises to the cell outer membrane. This Chlamydia pneumoniae (Chlamydophila pneumoniae) protein is Probable outer membrane protein pmp11 (pmp11).